A 101-amino-acid chain; its full sequence is Ribonuclease P protein component 1 (101 aa).

Belongs to the eukaryotic/archaeal RNase P protein component 1 family. Consists of a catalytic RNA component and at least 4-5 protein subunits.

The protein localises to the cytoplasm. The catalysed reaction is Endonucleolytic cleavage of RNA, removing 5'-extranucleotides from tRNA precursor.. Part of ribonuclease P, a protein complex that generates mature tRNA molecules by cleaving their 5'-ends. The protein is Ribonuclease P protein component 1 of Methanococcoides burtonii (strain DSM 6242 / NBRC 107633 / OCM 468 / ACE-M).